The primary structure comprises 323 residues: tRNA U34 carboxymethyltransferase (323 aa).

Carboxy-S-adenosyl-L-methionine contacts are provided by residues lysine 91, tryptophan 105, lysine 110, glycine 130, 152–154 (DPT), 181–182 (IE), methionine 196, tyrosine 200, and arginine 315.

Belongs to the class I-like SAM-binding methyltransferase superfamily. CmoB family. Homotetramer.

It catalyses the reaction carboxy-S-adenosyl-L-methionine + 5-hydroxyuridine(34) in tRNA = 5-carboxymethoxyuridine(34) in tRNA + S-adenosyl-L-homocysteine + H(+). Functionally, catalyzes carboxymethyl transfer from carboxy-S-adenosyl-L-methionine (Cx-SAM) to 5-hydroxyuridine (ho5U) to form 5-carboxymethoxyuridine (cmo5U) at position 34 in tRNAs. The polypeptide is tRNA U34 carboxymethyltransferase (Escherichia fergusonii (strain ATCC 35469 / DSM 13698 / CCUG 18766 / IAM 14443 / JCM 21226 / LMG 7866 / NBRC 102419 / NCTC 12128 / CDC 0568-73)).